Here is a 321-residue protein sequence, read N- to C-terminus: Lactamase-like protein notP (321 aa).

Residues His-108, His-110, Asp-112, and His-113 each contribute to the Zn(2+) site. Catalysis depends on Asp-112, which acts as the Proton donor/acceptor.

Belongs to the metallo-beta-lactamase superfamily. The cofactor is Zn(2+).

In terms of biological role, lactamase-like protein; part of the gene cluster that mediates the biosynthesis of notoamide, a fungal indole alkaloid that belongs to a family of natural products containing a characteristic bicyclo[2.2.2]diazaoctane core. The first step of notoamide biosynthesis involves coupling of L-proline and L-tryptophan by the bimodular NRPS notE, to produce cyclo-L-tryptophan-L-proline called brevianamide F. The reverse prenyltransferase notF then acts as a deoxybrevianamide E synthase and converts brevianamide F to deoxybrevianamide E via reverse prenylation at C-2 of the indole ring leading to the bicyclo[2.2.2]diazaoctane core. Deoxybrevianamide E is further hydroxylated at C-6 of the indole ring, likely catalyzed by the cytochrome P450 monooxygenase notG, to yield 6-hydroxy-deoxybrevianamide E. 6-hydroxy-deoxybrevianamide E is a specific substrate of the prenyltransferase notC for normal prenylation at C-7 to produce 6-hydroxy-7-prenyl-deoxybrevianamide, also called notoamide S. As the proposed pivotal branching point in notoamide biosynthesis, notoamide S can be diverted to notoamide E through an oxidative pyran ring closure putatively catalyzed by either notH cytochrome P450 monooxygenase or the notD FAD-linked oxidoreductase. This step would be followed by an indole 2,3-epoxidation-initiated pinacol-like rearrangement catalyzed by the notB FAD-dependent monooxygenase leading to the formation of notoamide C and notoamide D. On the other hand notoamide S is converted to notoamide T by notH (or notD), a bifunctional oxidase that also functions as the intramolecular Diels-Alderase responsible for generation of (+)-notoamide T. To generate antipodal (-)-notoaminide T, notH' (or notD') in Aspergillus versicolor is expected to catalyze a Diels-Alder reaction leading to the opposite stereochemistry. The remaining oxidoreductase notD (or notH) likely catalyzes the oxidative pyran ring formation to yield (+)-stephacidin A. The FAD-dependent monooxygenase notI is highly similar to notB and is predicted to catalyze a similar conversion from (+)-stephacidin A to (-)-notoamide B via the 2,3-epoxidation of (+)-stephacidin A followed by a pinacol-type rearrangement. Finally, it remains unclear which enzyme could be responsible for the final hydroxylation steps leading to notoamide A and sclerotiamide. The function of notP in the notoamide biosynthesis has not been determined yet. This Aspergillus sp. (strain MF297-2) protein is Lactamase-like protein notP.